A 523-amino-acid polypeptide reads, in one-letter code: Aldehyde oxidase GLOX (523 aa).

Positions 1 to 19 are cleaved as a signal peptide; that stretch reads MILDAAIVALADLPGTWEL.

It localises to the secreted. The protein localises to the cell wall. The catalysed reaction is an aldehyde + O2 + H2O = a carboxylate + H2O2 + H(+). Functionally, catalyzes the oxidation of aldehydes to the corresponding carboxylate by coupling the reaction to the reduction of dioxygen to hydrogen peroxide. Substrates include glyoxal and other aldehydes. Involved in disease resistance against the grapevine powdery mildew E.necator. Is sufficient to confer disease resistance to E.necator. Can produce hydrogen peroxide in response to E.necator infection, and this may directly play a role in the defense mechanism during plant-pathogen interactions. This chain is Aldehyde oxidase GLOX, found in Vitis pseudoreticulata (Chinese wild grapevine).